A 150-amino-acid chain; its full sequence is Endoribonuclease YbeY (150 aa).

Residues His-116, His-120, and His-126 each contribute to the Zn(2+) site.

The protein belongs to the endoribonuclease YbeY family. Zn(2+) serves as cofactor.

It localises to the cytoplasm. Functionally, single strand-specific metallo-endoribonuclease involved in late-stage 70S ribosome quality control and in maturation of the 3' terminus of the 16S rRNA. This chain is Endoribonuclease YbeY, found in Mesomycoplasma hyopneumoniae (strain 232) (Mycoplasma hyopneumoniae).